Here is a 360-residue protein sequence, read N- to C-terminus: Protein phosphatase 1L (360 aa).

Over 1–25 (MIEDTMTLLSLLGRIMRYFLLRPET) the chain is Extracellular. Residues 26–42 (LFLLCISLALWSYFFHT) form a helical membrane-spanning segment. The Cytoplasmic portion of the chain corresponds to 43–360 (DEVKTIVKSS…FRNSSKTEEQ (318 aa)). A PPM-type phosphatase domain is found at 92-351 (NVAVYSIQGR…DNITVMVVKF (260 aa)). 4 residues coordinate Mn(2+): aspartate 128, glycine 129, aspartate 302, and aspartate 342.

It belongs to the PP2C family. In terms of assembly, interacts with MAP3K7/TAK1. Interacts with MAP3K5. It depends on Mg(2+) as a cofactor. Mn(2+) serves as cofactor. Ubiquitous. Highly expressed in heart, placenta, lung, liver, kidney and pancreas.

It localises to the membrane. The catalysed reaction is O-phospho-L-seryl-[protein] + H2O = L-seryl-[protein] + phosphate. It catalyses the reaction O-phospho-L-threonyl-[protein] + H2O = L-threonyl-[protein] + phosphate. In terms of biological role, acts as a suppressor of the SAPK signaling pathways by associating with and dephosphorylating MAP3K7/TAK1 and MAP3K5, and by attenuating the association between MAP3K7/TAK1 and MAP2K4 or MAP2K6. The sequence is that of Protein phosphatase 1L (PPM1L) from Homo sapiens (Human).